Reading from the N-terminus, the 248-residue chain is MSTSVPTKNDVLVPETLLKKRKSQEKARAERQAEIEKKKAANKEKRAVIFKRAETYVKEYRDVEREKIRLQRAAKQDGSFHIPAEAKLIFLIRIKGINKIPPKPRKILQLLRLLQINNGVFVRVTKATAEMIKIVEPWVAYGYPNLKSVKELIYKRGYGKVNKQRVALTDNSIIEENLGKYGIICMEDLIHEIYTVGPNFKQASNFLWPFKLSNPTGGFRTRKFKHFIEGGDLGNREEHINALIRQMN.

A disordered region spans residues 22 to 42 (KSQEKARAERQAEIEKKKAAN). Over residues 24–42 (QEKARAERQAEIEKKKAAN) the composition is skewed to basic and acidic residues.

The protein belongs to the universal ribosomal protein uL30 family. As to quaternary structure, component of the large ribosomal subunit (LSU). Mature N.crassa ribosomes consist of a small (40S) and a large (60S) subunit. The 40S small subunit contains 1 molecule of ribosomal RNA (18S rRNA) and at least 32 different proteins. The large 60S subunit contains 3 rRNA molecules (26S, 5.8S and 5S rRNA) and at least 42 different proteins.

The protein resides in the cytoplasm. Functionally, component of the ribosome, a large ribonucleoprotein complex responsible for the synthesis of proteins in the cell. The small ribosomal subunit (SSU) binds messenger RNAs (mRNAs) and translates the encoded message by selecting cognate aminoacyl-transfer RNA (tRNA) molecules. The large subunit (LSU) contains the ribosomal catalytic site termed the peptidyl transferase center (PTC), which catalyzes the formation of peptide bonds, thereby polymerizing the amino acids delivered by tRNAs into a polypeptide chain. The nascent polypeptides leave the ribosome through a tunnel in the LSU and interact with protein factors that function in enzymatic processing, targeting, and the membrane insertion of nascent chains at the exit of the ribosomal tunnel. The polypeptide is Large ribosomal subunit protein uL30 (rpl-7) (Neurospora crassa (strain ATCC 24698 / 74-OR23-1A / CBS 708.71 / DSM 1257 / FGSC 987)).